We begin with the raw amino-acid sequence, 1101 residues long: Rho guanine nucleotide exchange factor gef2 (1101 aa).

Positions 203 to 222 (EDSRKKTSSPSPSFASSKDA) are disordered. A compositionally biased stretch (low complexity) spans 210 to 219 (SSPSPSFASS). The region spanning 230–428 (KKKSLLIEMM…KNIAEMPTVD (199 aa)) is the DH domain. Phosphoserine is present on residues serine 736 and serine 977.

It localises to the cytoplasm. It is found in the cytoskeleton. The protein localises to the microtubule organizing center. The protein resides in the spindle pole body. In terms of biological role, has a role in the control of cell polarity and cytokinesis. Involved in bipolar growth and septum formation. The polypeptide is Rho guanine nucleotide exchange factor gef2 (gef2) (Schizosaccharomyces pombe (strain 972 / ATCC 24843) (Fission yeast)).